The following is a 20-amino-acid chain: Dahlein-5.1 (20 aa).

Expressed by the skin dorsal glands.

Its subcellular location is the secreted. In terms of biological role, has no antimicrobial activity. Strongly inhibits the formation of NO by neuronal nitric oxide synthase at micromolar concentrations. Acts by a non-competitive mechanism, probably by binding to calcium/calmodulin and as a consequence blocking calmodulin attachment to nNOS. In Ranoidea dahlii (Dahl's aquatic frog), this protein is Dahlein-5.1.